We begin with the raw amino-acid sequence, 297 residues long: 4-hydroxy-tetrahydrodipicolinate synthase (297 aa).

Threonine 49 is a binding site for pyruvate. The Proton donor/acceptor role is filled by tyrosine 137. Lysine 166 functions as the Schiff-base intermediate with substrate in the catalytic mechanism. Pyruvate is bound at residue isoleucine 208.

The protein belongs to the DapA family. In terms of assembly, homotetramer; dimer of dimers.

Its subcellular location is the cytoplasm. It catalyses the reaction L-aspartate 4-semialdehyde + pyruvate = (2S,4S)-4-hydroxy-2,3,4,5-tetrahydrodipicolinate + H2O + H(+). It functions in the pathway amino-acid biosynthesis; L-lysine biosynthesis via DAP pathway; (S)-tetrahydrodipicolinate from L-aspartate: step 3/4. Its function is as follows. Catalyzes the condensation of (S)-aspartate-beta-semialdehyde [(S)-ASA] and pyruvate to 4-hydroxy-tetrahydrodipicolinate (HTPA). The sequence is that of 4-hydroxy-tetrahydrodipicolinate synthase from Porphyromonas gingivalis (strain ATCC 33277 / DSM 20709 / CIP 103683 / JCM 12257 / NCTC 11834 / 2561).